Consider the following 99-residue polypeptide: A-type ATP synthase subunit F (99 aa).

The protein belongs to the V-ATPase F subunit family. In terms of assembly, has multiple subunits with at least A(3), B(3), C, D, E, F, H, I and proteolipid K(x).

The protein localises to the cell membrane. Functionally, component of the A-type ATP synthase that produces ATP from ADP in the presence of a proton gradient across the membrane. In Methanococcus vannielii (strain ATCC 35089 / DSM 1224 / JCM 13029 / OCM 148 / SB), this protein is A-type ATP synthase subunit F.